Reading from the N-terminus, the 87-residue chain is DNA-directed RNA polymerase subunit omega (87 aa).

It belongs to the RNA polymerase subunit omega family. As to quaternary structure, the RNAP catalytic core consists of 2 alpha, 1 beta, 1 beta' and 1 omega subunit. When a sigma factor is associated with the core the holoenzyme is formed, which can initiate transcription.

It carries out the reaction RNA(n) + a ribonucleoside 5'-triphosphate = RNA(n+1) + diphosphate. Functionally, promotes RNA polymerase assembly. Latches the N- and C-terminal regions of the beta' subunit thereby facilitating its interaction with the beta and alpha subunits. The chain is DNA-directed RNA polymerase subunit omega from Pseudomonas fluorescens (strain SBW25).